The primary structure comprises 464 residues: Fumarate hydratase class II (464 aa).

Residues 98 to 100, 129 to 132, 139 to 141, and Thr-187 contribute to the substrate site; these read SGT, HPND, and SSN. His-188 functions as the Proton donor/acceptor in the catalytic mechanism. Residue Ser-318 is part of the active site. Residues Ser-319 and 324 to 326 contribute to the substrate site; that span reads KVN.

This sequence belongs to the class-II fumarase/aspartase family. Fumarase subfamily. In terms of assembly, homotetramer.

The protein localises to the cytoplasm. The catalysed reaction is (S)-malate = fumarate + H2O. The protein operates within carbohydrate metabolism; tricarboxylic acid cycle; (S)-malate from fumarate: step 1/1. In terms of biological role, involved in the TCA cycle. Catalyzes the stereospecific interconversion of fumarate to L-malate. The polypeptide is Fumarate hydratase class II (Haemophilus ducreyi (strain 35000HP / ATCC 700724)).